A 127-amino-acid chain; its full sequence is DNA-directed RNA polymerases I, II, and III subunit RPABC2 (127 aa).

A compositionally biased stretch (acidic residues) spans 1–32; it reads MSDNEDNFDGDDFDDVEEDEGLDDLENAEEEG. Residues 1 to 52 are disordered; that stretch reads MSDNEDNFDGDDFDDVEEDEGLDDLENAEEEGQVNVEILPSGERPQANQKRI. An N-acetylserine modification is found at Ser-2. Phosphoserine; by CK2 is present on Ser-2.

This sequence belongs to the archaeal Rpo6/eukaryotic RPB6 RNA polymerase subunit family. In terms of assembly, component of the RNA polymerase I (Pol I), RNA polymerase II (Pol II) and RNA polymerase III (Pol III) complexes consisting of at least 13, 12 and 17 subunits, respectively. Pol I complex consists of a ten-subunit catalytic core composed of POLR1A/RPA1, POLR1B/RPA2, POLR1C/RPAC1, POLR1D/RPAC2, POLR1H/RPA12, POLR2E/RPABC1, POLR2F/RPABC2, POLR2H/RPABC3, POLR2K/RPABC4 and POLR2L/RPABC5; a mobile stalk subunit POLR1F/RPA43 protruding from the core and additional subunits homologous to general transcription factors POLR1E/RPA49 and POLR1G/RPA34. Part of Pol I pre-initiation complex (PIC), in which Pol I core assembles with RRN3 and promoter-bound UTBF and SL1/TIF-IB complex. Pol II complex contains a ten-subunit catalytic core composed of POLR2A/RPB1, POLR2B/RPB2, POLR2C/RPB3, POLR2I/RPB9, POLR2J/RPB11, POLR2E/RPABC1, POLR2F/RPABC2, POLR2H/RPABC3, POLR2K/RPABC4 and POLR2L/RPABC5 and a mobile stalk composed of two subunits POLR2D/RPB4 and POLR2G/RPB7. Part of Pol II(G) complex, in which Pol II core associates with an additional subunit POLR2M; unlike conventional Pol II, Pol II(G) functions as a transcriptional repressor. Part of TBP-based Pol II pre-initiation complex (PIC), in which Pol II core assembles with general transcription factors and other specific initiation factors including GTF2E1, GTF2E2, GTF2F1, GTF2F2, TCEA1, ERCC2, ERCC3, GTF2H2, GTF2H3, GTF2H4, GTF2H5, GTF2A1, GTF2A2, GTF2B and TBP; this large multi-subunit PIC complex mediates DNA unwinding and targets Pol II core to the transcription start site where the first phosphodiester bond forms. Pol III complex consists of a ten-subunit catalytic core composed of POLR3A/RPC1, POLR3B/RPC2, POLR1C/RPAC1, POLR1D/RPAC2, POLR3K/RPC10, POLR2E/RPABC1, POLR2F/RPABC2, POLR2H/RPABC3, POLR2K/RPABC4 and POLR2L/RPABC5; a mobile stalk composed of two subunits POLR3H/RPC8 and CRCP/RPC9, protruding from the core and functioning primarily in transcription initiation; and additional subunits homologous to general transcription factors of the RNA polymerase II machinery, POLR3C/RPC3-POLR3F/RPC6-POLR3G/RPC7 heterotrimer required for transcription initiation and POLR3D/RPC4-POLR3E/RPC5 heterodimer involved in both transcription initiation and termination.

The protein localises to the nucleus. The protein resides in the nucleolus. Its function is as follows. DNA-dependent RNA polymerase catalyzes the transcription of DNA into RNA using the four ribonucleoside triphosphates as substrates. Common component of RNA polymerases I, II, and III which synthesize ribosomal RNA precursors, mRNA precursors and many functional non-coding RNAs, and small RNAs, such as 5S rRNA and tRNAs, respectively. Pol II is the central component of the basal RNA polymerase II transcription machinery. Pols are composed of mobile elements that move relative to each other. In Pol II, POLR2F/RPABC2 is part of the clamp element and together with parts of POLR2A/RPB1 and POLR2B/RPB2 forms a pocket to which the POLR2D/RPB4-POLR2G/RPB7 subcomplex binds. In Bos taurus (Bovine), this protein is DNA-directed RNA polymerases I, II, and III subunit RPABC2 (POLR2F).